Consider the following 364-residue polypeptide: Glycerol dehydrogenase (364 aa).

Aspartate 37, glycine 92, lysine 93, threonine 114, and serine 117 together coordinate NAD(+). Glycerol is bound at residue aspartate 119. 3 residues coordinate NAD(+): serine 123, leucine 125, and tyrosine 129. Residues aspartate 169, histidine 252, and histidine 269 each coordinate glycerol. Zn(2+)-binding residues include aspartate 169, histidine 252, and histidine 269.

The protein belongs to the iron-containing alcohol dehydrogenase family. Requires Zn(2+) as cofactor.

It catalyses the reaction glycerol + NAD(+) = dihydroxyacetone + NADH + H(+). The protein operates within polyol metabolism; glycerol fermentation; glycerone phosphate from glycerol (oxidative route): step 1/2. Catalyzes the NAD-dependent oxidation of glycerol to dihydroxyacetone (glycerone). This Thermotoga maritima (strain ATCC 43589 / DSM 3109 / JCM 10099 / NBRC 100826 / MSB8) protein is Glycerol dehydrogenase (gldA).